The sequence spans 88 residues: Small ribosomal subunit protein uS15c (88 aa).

Belongs to the universal ribosomal protein uS15 family. In terms of assembly, part of the 30S ribosomal subunit.

The protein localises to the plastid. The protein resides in the chloroplast. This Aethionema grandiflorum (Persian stone-cress) protein is Small ribosomal subunit protein uS15c (rps15).